The chain runs to 20 residues: Hemocyanin subunit Ib (20 aa).

Residues 1–20 (DSVGSTTAHKQQNINHLLDK) form a disordered region.

The protein belongs to the tyrosinase family. Hemocyanin subfamily. As to quaternary structure, composed of 3 major subunits (IB, II and III) and 1 minor subunit (IA) which form homohexamers and heterohexamers. May also form larger structures. Hemolymph.

Its subcellular location is the secreted. The protein resides in the extracellular space. Functionally, hemocyanins are copper-containing oxygen carriers occurring freely dissolved in the hemolymph of many mollusks and arthropods. This chain is Hemocyanin subunit Ib, found in Panulirus japonicus (Japanese spiny lobster).